A 307-amino-acid chain; its full sequence is 2-dehydropantoate 2-reductase (307 aa).

NADP(+) contacts are provided by residues 7–12 (GSGAMG), Asn102, and Ala128. Substrate is bound at residue Asn102. Lys184 functions as the Proton donor in the catalytic mechanism. The substrate site is built by Asn188, Asn192, and Ser255. Glu268 serves as a coordination point for NADP(+).

Belongs to the ketopantoate reductase family.

Its subcellular location is the cytoplasm. The enzyme catalyses (R)-pantoate + NADP(+) = 2-dehydropantoate + NADPH + H(+). The protein operates within cofactor biosynthesis; (R)-pantothenate biosynthesis; (R)-pantoate from 3-methyl-2-oxobutanoate: step 2/2. Catalyzes the NADPH-dependent reduction of ketopantoate into pantoic acid. This chain is 2-dehydropantoate 2-reductase (apbA), found in Streptococcus pyogenes serotype M6 (strain ATCC BAA-946 / MGAS10394).